The chain runs to 983 residues: ABC transporter A family member 2 (983 aa).

The next 6 membrane-spanning stretches (helical) occupy residues 33–53 (FLQL…QAAM), 221–241 (IVAL…FGFV), 279–299 (ILTA…QFDF), 305–325 (FPVV…LAFM), 339–359 (VGFF…SGFP), and 416–436 (VLTI…WFVL). Residues 518-763 (VQIRGLAKTY…FGTGFIANIS (246 aa)) form the ABC transporter domain. 564-571 (GPNGAGKT) is a binding site for ATP. Residues 963–983 (RSGSTSSRRFSRSGSSRRFSS) are disordered.

This sequence belongs to the ABC transporter superfamily. ABCA family. CPR flippase (TC 3.A.1.211) subfamily.

The protein resides in the membrane. This is ABC transporter A family member 2 (ABCA2) from Arabidopsis thaliana (Mouse-ear cress).